Here is a 407-residue protein sequence, read N- to C-terminus: Large ribosomal subunit protein uL4y (407 aa).

The tract at residues 57–96 is disordered; it reads PYAVSKKAGHQTSAESWGTGRAVSRIPRVPGGGTHRAGQA.

Belongs to the universal ribosomal protein uL4 family.

This is Large ribosomal subunit protein uL4y (RPL4D) from Arabidopsis thaliana (Mouse-ear cress).